Here is a 418-residue protein sequence, read N- to C-terminus: Nuclear receptor coactivator 6 (418 aa).

Disordered stretches follow at residues 1 to 21 (EQIM…QNQS) and 77 to 98 (PPGP…ANND). The tract at residues 1-215 (EQIMTNQMQG…PPRKKKNCHQ (215 aa)) is TBP/GTF2A-binding region. Positions 1–352 (EQIMTNQMQG…LPVSQNVHPP (352 aa)) are CREBBP-binding region. The tract at residues 1-418 (EQIMTNQMQG…YQESPQNSSS (418 aa)) is NCOA1-binding region. The interval 60-214 (VSNSPSQVMG…KPPRKKKNCH (155 aa)) is NCOA6IP-binding region. Residues 84–98 (MAQQHTDPATTANND) show a composition bias toward polar residues. Ser-171 is modified (phosphoserine). The LXXLL motif motif lies at 174-178 (LVNLL). The segment at 186-418 (HFGVNNKQNN…YQESPQNSSS (233 aa)) is disordered. The span at 190-199 (NNKQNNTNAN) shows a compositional bias: low complexity. Positions 200 to 212 (KQKKKKPPRKKKN) are enriched in basic residues. Positions 269 to 279 (PLQQMPPQLMQ) are enriched in low complexity. Residues 282–310 (APPPQPPQQQPQPQLPQQQPQPQPPPPSQ) are compositionally biased toward pro residues. Positions 311–336 (PQSQQQQQQQQQQQQQQMMMMLMMQQ) are enriched in low complexity. Asymmetric dimethylarginine occurs at positions 342 and 353. Positions 358–370 (PDSQRVPMQQSGN) are enriched in polar residues. Position 391 is an asymmetric dimethylarginine (Arg-391). Residues 399–418 (PLGSNSRKMVYQESPQNSSS) show a composition bias toward polar residues.

Monomer and homodimer. Interacts in vitro with the basal transcription factors GTF2A and TBP, suggesting an autonomous transactivation function. Interacts with NCOA1, CRSP3, RBM14, the histone acetyltransferase proteins EP300 and CREBBP, and with methyltransferase proteins NCOA6IP and PRMT2. Component of the MLL2/3 complex (also named ASCOM complex), at least composed of KMT2D/MLL2 or KMT2C/MLL3, ASH2L, RBBP5, WDR5, NCOA6, DPY30, KDM6A, PAXIP1/PTIP, PAGR1 and alpha- and beta-tubulin. Interacts with ZNF335; may enhance ligand-dependent transcriptional activation by nuclear hormone receptors. Post-translationally, phosphorylated.

It is found in the nucleus. In terms of biological role, nuclear receptor coactivator that directly binds nuclear receptors and stimulates the transcriptional activities in a hormone-dependent fashion. Coactivate expression in an agonist- and AF2-dependent manner. May coactivate expression via a remodeling of chromatin and its interaction with histone acetyltransferase proteins. Involved in the coactivation of different nuclear receptors, such as for steroids (GR and ERs), retinoids (RARs and RXRs), thyroid hormone (TRs), vitamin D3 (VDR) and prostanoids (PPARs). Probably functions as a general coactivator, rather than just a nuclear receptor coactivator. May also be involved in the coactivation of the NF-kappa-B pathway. In Rattus norvegicus (Rat), this protein is Nuclear receptor coactivator 6 (Ncoa6).